The chain runs to 362 residues: Heme A synthase (362 aa).

The next 5 helical transmembrane spans lie at 11-31 (AAIR…VLVG), 102-122 (VIGM…AVSG), 128-148 (LWLI…MVAS), 159-179 (VRLA…VWTL), and 198-218 (AWAL…VAGL). Residue histidine 262 participates in heme binding. Transmembrane regions (helical) follow at residues 264–286 (MTAY…AGAG), 297–317 (LAAI…VVPI), and 318–338 (SLAL…VLQA). Histidine 323 contacts heme.

It belongs to the COX15/CtaA family. Type 2 subfamily. As to quaternary structure, interacts with CtaB. It depends on heme b as a cofactor.

The protein localises to the cell membrane. The catalysed reaction is Fe(II)-heme o + 2 A + H2O = Fe(II)-heme a + 2 AH2. Its pathway is porphyrin-containing compound metabolism; heme A biosynthesis; heme A from heme O: step 1/1. In terms of biological role, catalyzes the conversion of heme O to heme A by two successive hydroxylations of the methyl group at C8. The first hydroxylation forms heme I, the second hydroxylation results in an unstable dihydroxymethyl group, which spontaneously dehydrates, resulting in the formyl group of heme A. In Bradyrhizobium sp. (strain ORS 278), this protein is Heme A synthase.